Here is a 552-residue protein sequence, read N- to C-terminus: Chaperonin GroEL (552 aa).

ATP-binding positions include 29–32 (TAGP), lysine 50, 86–90 (DGTTT), glycine 417, and aspartate 499.

The protein belongs to the chaperonin (HSP60) family. In terms of assembly, forms a cylinder of 14 subunits composed of two heptameric rings stacked back-to-back. Interacts with the co-chaperonin GroES.

The protein localises to the cytoplasm. The enzyme catalyses ATP + H2O + a folded polypeptide = ADP + phosphate + an unfolded polypeptide.. Together with its co-chaperonin GroES, plays an essential role in assisting protein folding. The GroEL-GroES system forms a nano-cage that allows encapsulation of the non-native substrate proteins and provides a physical environment optimized to promote and accelerate protein folding. The protein is Chaperonin GroEL of Ehrlichia canis (strain Jake).